A 344-amino-acid polypeptide reads, in one-letter code: N-acetyl-gamma-glutamyl-phosphate reductase (344 aa).

The active site involves cysteine 148.

It belongs to the NAGSA dehydrogenase family. Type 1 subfamily.

Its subcellular location is the cytoplasm. The enzyme catalyses N-acetyl-L-glutamate 5-semialdehyde + phosphate + NADP(+) = N-acetyl-L-glutamyl 5-phosphate + NADPH + H(+). It participates in amino-acid biosynthesis; L-arginine biosynthesis; N(2)-acetyl-L-ornithine from L-glutamate: step 3/4. Catalyzes the NADPH-dependent reduction of N-acetyl-5-glutamyl phosphate to yield N-acetyl-L-glutamate 5-semialdehyde. The polypeptide is N-acetyl-gamma-glutamyl-phosphate reductase (Clostridium botulinum (strain Eklund 17B / Type B)).